A 474-amino-acid polypeptide reads, in one-letter code: Probable fucosyltransferase 9 (474 aa).

The helical; Signal-anchor for type II membrane protein transmembrane segment at 1–21 (MIKLTIAIATCLVLCLVLLLP) threads the bilayer. Topologically, residues 22–474 (SSNISYRHKY…LKLVDVSDEL (453 aa)) are lumenal. Residues Asn-24, Asn-39, and Asn-208 are each glycosylated (N-linked (GlcNAc...) asparagine).

It belongs to the glycosyltransferase 37 family. In terms of tissue distribution, expressed in leaves and stems.

The protein resides in the golgi apparatus. Its subcellular location is the golgi stack membrane. It participates in protein modification; protein glycosylation. May be involved in cell wall biosynthesis. May act as a fucosyltransferase. The protein is Probable fucosyltransferase 9 (FUT9) of Arabidopsis thaliana (Mouse-ear cress).